The sequence spans 206 residues: Homoserine/homoserine lactone efflux protein (206 aa).

Helical transmembrane passes span 5–25 (WWFAYLLTSTLLSLSPGSGAI), 45–65 (GLQTGLGIHIVLVGVGLGTLF), 68–88 (SLIAFEILKWAGAAYLIWLGI), 117–137 (FVNLTNPKSIVFLAALFPQFI), 148–168 (LILGVTTIVVDMIVMTGYATL), and 182–202 (MKALNKAFGSLFMLVGALLAS).

This sequence belongs to the Rht family.

It is found in the cell membrane. Conducts the efflux of homoserine and homoserine lactone. The polypeptide is Homoserine/homoserine lactone efflux protein (rhtB) (Salmonella typhi).